Here is a 709-residue protein sequence, read N- to C-terminus: DNA ligase (709 aa).

NAD(+)-binding positions include 34-38 (DAEYD), 83-84 (SL), and glutamate 115. Residue lysine 117 is the N6-AMP-lysine intermediate of the active site. The NAD(+) site is built by arginine 138, glutamate 185, lysine 301, and lysine 325. 4 residues coordinate Zn(2+): cysteine 419, cysteine 422, cysteine 437, and cysteine 443. A BRCT domain is found at 602-691 (RQSDTLAGKT…AEPPPSPPPP (90 aa)). The segment at 679–709 (GTTAEPPPSPPPPPPETNTDGNQLLLPLDGE) is disordered. A compositionally biased stretch (pro residues) spans 683-694 (EPPPSPPPPPPE).

Belongs to the NAD-dependent DNA ligase family. LigA subfamily. Mg(2+) serves as cofactor. Requires Mn(2+) as cofactor.

The catalysed reaction is NAD(+) + (deoxyribonucleotide)n-3'-hydroxyl + 5'-phospho-(deoxyribonucleotide)m = (deoxyribonucleotide)n+m + AMP + beta-nicotinamide D-nucleotide.. Its function is as follows. DNA ligase that catalyzes the formation of phosphodiester linkages between 5'-phosphoryl and 3'-hydroxyl groups in double-stranded DNA using NAD as a coenzyme and as the energy source for the reaction. It is essential for DNA replication and repair of damaged DNA. The chain is DNA ligase from Chloroflexus aurantiacus (strain ATCC 29364 / DSM 637 / Y-400-fl).